A 352-amino-acid polypeptide reads, in one-letter code: Photosystem II D2 protein (352 aa).

Residues Cys40–Thr60 traverse the membrane as a helical segment. Residue His117 coordinates chlorophyll a. A helical membrane pass occupies residues Gly124 to Pro140. Pheophytin a is bound by residues Gln129 and Asn142. A helical transmembrane segment spans residues Val152–Ser165. His197 contacts chlorophyll a. The chain crosses the membrane as a helical span at residues Gly207 to Glu227. His214 and Phe261 together coordinate a plastoquinone. His214 is a Fe cation binding site. A Fe cation-binding site is contributed by His268. The chain crosses the membrane as a helical span at residues Gly278–Arg294.

The protein belongs to the reaction center PufL/M/PsbA/D family. As to quaternary structure, PSII is composed of 1 copy each of membrane proteins PsbA, PsbB, PsbC, PsbD, PsbE, PsbF, PsbH, PsbI, PsbJ, PsbK, PsbL, PsbM, PsbT, PsbX, PsbY, PsbZ, Psb30/Ycf12, peripheral proteins PsbO, CyanoQ (PsbQ), PsbU, PsbV and a large number of cofactors. It forms dimeric complexes. It depends on The D1/D2 heterodimer binds P680, chlorophylls that are the primary electron donor of PSII, and subsequent electron acceptors. It shares a non-heme iron and each subunit binds pheophytin, quinone, additional chlorophylls, carotenoids and lipids. There is also a Cl(-1) ion associated with D1 and D2, which is required for oxygen evolution. The PSII complex binds additional chlorophylls, carotenoids and specific lipids. as a cofactor.

Its subcellular location is the cellular thylakoid membrane. It catalyses the reaction 2 a plastoquinone + 4 hnu + 2 H2O = 2 a plastoquinol + O2. Functionally, photosystem II (PSII) is a light-driven water:plastoquinone oxidoreductase that uses light energy to abstract electrons from H(2)O, generating O(2) and a proton gradient subsequently used for ATP formation. It consists of a core antenna complex that captures photons, and an electron transfer chain that converts photonic excitation into a charge separation. The D1/D2 (PsbA/PsbD) reaction center heterodimer binds P680, the primary electron donor of PSII as well as several subsequent electron acceptors. D2 is needed for assembly of a stable PSII complex. In Synechococcus sp. (strain JA-3-3Ab) (Cyanobacteria bacterium Yellowstone A-Prime), this protein is Photosystem II D2 protein.